Here is a 567-residue protein sequence, read N- to C-terminus: Phenylalanine--tRNA ligase beta subunit (567 aa).

The region spanning 287–362 (YFQEEVEFNV…IGEGLASFHP (76 aa)) is the B5 domain. Residues Asp-340, Asp-346, Glu-349, and Asp-350 each contribute to the Mg(2+) site.

This sequence belongs to the phenylalanyl-tRNA synthetase beta subunit family. Type 2 subfamily. In terms of assembly, tetramer of two alpha and two beta subunits. Mg(2+) serves as cofactor.

The protein resides in the cytoplasm. The enzyme catalyses tRNA(Phe) + L-phenylalanine + ATP = L-phenylalanyl-tRNA(Phe) + AMP + diphosphate + H(+). The sequence is that of Phenylalanine--tRNA ligase beta subunit from Borreliella afzelii (strain PKo) (Borrelia afzelii).